A 266-amino-acid chain; its full sequence is MDTFQVIILALIQGLTEFLPISSSAHLILPAQLLGWEDQGLSFDVAVNTGSLFAVVIYFRNELWAMFKAWIASMVKGQHSDDSKLAWWIILATLPAVFFGFIAKDFIETHLRSAGVIAVTTIVFGLLLWWADKMSRRDLTVYQTGWRKALLIGFAQALALIPGTSRSGATMTAALMLGLSRDAAARFSFLMSVPVSLGAAILVGKDLAESPLPIDFQALTLGTVISFVAAYLCIHYFLKIISRMGMTPFVIYRLILGAVLCGFIFL.

8 helical membrane passes run M1–I21, Q39–F59, W87–I107, L111–A131, A149–A169, A183–V203, A218–L238, and M246–L266.

It belongs to the UppP family.

It localises to the cell inner membrane. The catalysed reaction is di-trans,octa-cis-undecaprenyl diphosphate + H2O = di-trans,octa-cis-undecaprenyl phosphate + phosphate + H(+). Its function is as follows. Catalyzes the dephosphorylation of undecaprenyl diphosphate (UPP). Confers resistance to bacitracin. The chain is Undecaprenyl-diphosphatase from Shewanella sp. (strain MR-4).